Here is a 351-residue protein sequence, read N- to C-terminus: Alcohol dehydrogenase 2 (351 aa).

7 residues coordinate Zn(2+): Cys-47, His-70, Cys-101, Cys-104, Cys-107, Cys-115, and Cys-157. NAD(+)-binding positions include 181 to 187 (GAGGGLG), Asp-205, Lys-209, 271 to 273 (VGL), and Arg-343.

The protein belongs to the zinc-containing alcohol dehydrogenase family. Homotetramer. It depends on Zn(2+) as a cofactor.

The enzyme catalyses a primary alcohol + NAD(+) = an aldehyde + NADH + H(+). It catalyses the reaction a secondary alcohol + NAD(+) = a ketone + NADH + H(+). This chain is Alcohol dehydrogenase 2 (sodh-2), found in Caenorhabditis elegans.